A 397-amino-acid chain; its full sequence is MGKEKFERKKPHVNIGTIGHIDHGKTTLTAAITKVAGLRGNGKFVAFDEIDKAPEEKERGITIATAHVEYETATRHYAHVDCPGHADYIKNMITGAAQMDGGILVVAATDGPMPQTREHILLARQVGVPYLVVFLNKCDMVDDEELLELVELEVRELLSLYGFPGDDIPVIRGSALKALETDDPNSADAAPVVALLDACDSYIPEPQRDIDKPFLMPIEDVFSISGRGTVVTGRVERGIIKVGEEVEIVGIKDTVKSTCTGVEMFRKLLDQGQAGDNIGALLRGIKREDVERGQVLAAPKSIKPHRKFKAEVYVLSKEEGGRHTPFFSGYRPQFYFRTTDITGIIALADGVEMVMPGDNSTFTVELIAPIAMEQGLRFAIREGGRTVGAGVVSEILE.

The region spanning 10-207 is the tr-type G domain; it reads KPHVNIGTIG…ACDSYIPEPQ (198 aa). Positions 19-26 are G1; it reads GHIDHGKT. 19–26 lines the GTP pocket; sequence GHIDHGKT. T26 provides a ligand contact to Mg(2+). Residues 60-64 form a G2 region; the sequence is GITIA. The tract at residues 81–84 is G3; the sequence is DCPG. GTP-binding positions include 81–85 and 136–139; these read DCPGH and NKCD. The tract at residues 136-139 is G4; sequence NKCD. Positions 174 to 176 are G5; that stretch reads SAL.

It belongs to the TRAFAC class translation factor GTPase superfamily. Classic translation factor GTPase family. EF-Tu/EF-1A subfamily. As to quaternary structure, monomer.

Its subcellular location is the cytoplasm. The catalysed reaction is GTP + H2O = GDP + phosphate + H(+). GTP hydrolase that promotes the GTP-dependent binding of aminoacyl-tRNA to the A-site of ribosomes during protein biosynthesis. The sequence is that of Elongation factor Tu from Nitratidesulfovibrio vulgaris (strain DSM 19637 / Miyazaki F) (Desulfovibrio vulgaris).